The following is a 252-amino-acid chain: Imidazole glycerol phosphate synthase subunit HisF (252 aa).

Residues Asp-11 and Asp-130 contribute to the active site.

Belongs to the HisA/HisF family. As to quaternary structure, heterodimer of HisH and HisF.

The protein resides in the cytoplasm. It carries out the reaction 5-[(5-phospho-1-deoxy-D-ribulos-1-ylimino)methylamino]-1-(5-phospho-beta-D-ribosyl)imidazole-4-carboxamide + L-glutamine = D-erythro-1-(imidazol-4-yl)glycerol 3-phosphate + 5-amino-1-(5-phospho-beta-D-ribosyl)imidazole-4-carboxamide + L-glutamate + H(+). The protein operates within amino-acid biosynthesis; L-histidine biosynthesis; L-histidine from 5-phospho-alpha-D-ribose 1-diphosphate: step 5/9. Its function is as follows. IGPS catalyzes the conversion of PRFAR and glutamine to IGP, AICAR and glutamate. The HisF subunit catalyzes the cyclization activity that produces IGP and AICAR from PRFAR using the ammonia provided by the HisH subunit. This chain is Imidazole glycerol phosphate synthase subunit HisF, found in Dictyoglomus thermophilum (strain ATCC 35947 / DSM 3960 / H-6-12).